The following is a 432-amino-acid chain: Glutamyl-tRNA reductase (432 aa).

Substrate-binding positions include 49–52 (TCNR), Ser-101, 106–108 (ESQ), and Gln-112. Cys-50 serves as the catalytic Nucleophile. 181 to 186 (GTGETI) is a binding site for NADP(+). Positions 410–432 (KPGYHHPTLQTTIVKTDETDPAS) are disordered.

It belongs to the glutamyl-tRNA reductase family. In terms of assembly, homodimer.

It catalyses the reaction (S)-4-amino-5-oxopentanoate + tRNA(Glu) + NADP(+) = L-glutamyl-tRNA(Glu) + NADPH + H(+). The protein operates within porphyrin-containing compound metabolism; protoporphyrin-IX biosynthesis; 5-aminolevulinate from L-glutamyl-tRNA(Glu): step 1/2. Its function is as follows. Catalyzes the NADPH-dependent reduction of glutamyl-tRNA(Glu) to glutamate 1-semialdehyde (GSA). The sequence is that of Glutamyl-tRNA reductase from Xylella fastidiosa (strain 9a5c).